Reading from the N-terminus, the 622-residue chain is Probable potassium transport system protein Kup (622 aa).

The next 12 membrane-spanning stretches (helical) occupy residues leucine 8–leucine 28, isoleucine 50–valine 70, valine 101–proline 121, proline 137–methionine 157, isoleucine 165–valine 185, isoleucine 213–alanine 233, tryptophan 247–leucine 267, alanine 285–isoleucine 305, isoleucine 337–phenylalanine 357, alanine 366–isoleucine 386, proline 393–alanine 413, and leucine 419–threonine 439.

Belongs to the HAK/KUP transporter (TC 2.A.72) family.

It localises to the cell inner membrane. The catalysed reaction is K(+)(in) + H(+)(in) = K(+)(out) + H(+)(out). Functionally, transport of potassium into the cell. Likely operates as a K(+):H(+) symporter. The sequence is that of Probable potassium transport system protein Kup from Polaromonas naphthalenivorans (strain CJ2).